Consider the following 112-residue polypeptide: DNA-binding protein Memar_1972 (112 aa).

The tract at residues 14–35 is disordered; the sequence is MEQMQRQAMDQQGMEEEAARQQ.

Belongs to the PDCD5 family.

In Methanoculleus marisnigri (strain ATCC 35101 / DSM 1498 / JR1), this protein is DNA-binding protein Memar_1972.